The sequence spans 100 residues: Small ribosomal subunit protein uS14c (100 aa).

Belongs to the universal ribosomal protein uS14 family. As to quaternary structure, part of the 30S ribosomal subunit.

Its subcellular location is the plastid. It is found in the chloroplast. Its function is as follows. Binds 16S rRNA, required for the assembly of 30S particles. The polypeptide is Small ribosomal subunit protein uS14c (Oedogonium cardiacum (Filamentous green alga)).